The following is a 139-amino-acid chain: Transcription antitermination protein NusB (139 aa).

The protein belongs to the NusB family.

Functionally, involved in transcription antitermination. Required for transcription of ribosomal RNA (rRNA) genes. Binds specifically to the boxA antiterminator sequence of the ribosomal RNA (rrn) operons. This Enterobacter sp. (strain 638) protein is Transcription antitermination protein NusB.